Here is a 371-residue protein sequence, read N- to C-terminus: 4-hydroxy-3-methylbut-2-en-1-yl diphosphate synthase (flavodoxin) (371 aa).

The [4Fe-4S] cluster site is built by Cys-270, Cys-273, Cys-305, and Glu-312.

Belongs to the IspG family. [4Fe-4S] cluster is required as a cofactor.

It carries out the reaction (2E)-4-hydroxy-3-methylbut-2-enyl diphosphate + oxidized [flavodoxin] + H2O + 2 H(+) = 2-C-methyl-D-erythritol 2,4-cyclic diphosphate + reduced [flavodoxin]. It functions in the pathway isoprenoid biosynthesis; isopentenyl diphosphate biosynthesis via DXP pathway; isopentenyl diphosphate from 1-deoxy-D-xylulose 5-phosphate: step 5/6. Converts 2C-methyl-D-erythritol 2,4-cyclodiphosphate (ME-2,4cPP) into 1-hydroxy-2-methyl-2-(E)-butenyl 4-diphosphate. The sequence is that of 4-hydroxy-3-methylbut-2-en-1-yl diphosphate synthase (flavodoxin) from Shewanella piezotolerans (strain WP3 / JCM 13877).